Here is a 129-residue protein sequence, read N- to C-terminus: M-zodatoxin-Lt8l (129 aa).

Positions methionine 1–serine 20 are cleaved as a signal peptide. Residues lysine 21–arginine 60 constitute a propeptide that is removed on maturation.

Belongs to the cationic peptide 06 (cytoinsectotoxin) family. As to expression, expressed by the venom gland.

It localises to the secreted. Insecticidal, cytolytic and antimicrobial peptide. Forms voltage-dependent, ion-permeable channels in membranes. At high concentration causes cell membrane lysis. The chain is M-zodatoxin-Lt8l (cit 1-12) from Lachesana tarabaevi (Spider).